A 194-amino-acid chain; its full sequence is Sigma factor AlgU negative regulatory protein (194 aa).

Residues L89–L105 form a helical membrane-spanning segment.

Belongs to the RseA family.

It localises to the cell membrane. Negative regulator of the sigma factor AlgU. Plays a role in the differentiation of P.aeruginosa into the alginate-producing form. Inactivation of mucA causes a switch from the non-mucoid to mucoid state resulting in constitutive expression of alginate biosynthetic genes. This is Sigma factor AlgU negative regulatory protein (mucA) from Pseudomonas aeruginosa (strain ATCC 15692 / DSM 22644 / CIP 104116 / JCM 14847 / LMG 12228 / 1C / PRS 101 / PAO1).